Here is a 630-residue protein sequence, read N- to C-terminus: UvrABC system protein C (630 aa).

Residues 18–97 enclose the GIY-YIG domain; the sequence is TQSGVYLMKN…IKKHRPKYNI (80 aa). Residues 207 to 242 enclose the UVR domain; sequence KKVIKSMTEKMMGAADEEKFEVAARLRDSIEAIKAI.

This sequence belongs to the UvrC family. In terms of assembly, interacts with UvrB in an incision complex.

Its subcellular location is the cytoplasm. Its function is as follows. The UvrABC repair system catalyzes the recognition and processing of DNA lesions. UvrC both incises the 5' and 3' sides of the lesion. The N-terminal half is responsible for the 3' incision and the C-terminal half is responsible for the 5' incision. This is UvrABC system protein C from Bdellovibrio bacteriovorus (strain ATCC 15356 / DSM 50701 / NCIMB 9529 / HD100).